Here is an 88-residue protein sequence, read N- to C-terminus: Small ribosomal subunit protein bS18B (88 aa).

The protein belongs to the bacterial ribosomal protein bS18 family. As to quaternary structure, part of the 30S ribosomal subunit. Forms a tight heterodimer with protein bS6.

Functionally, binds as a heterodimer with protein bS6 to the central domain of the 16S rRNA, where it helps stabilize the platform of the 30S subunit. This is Small ribosomal subunit protein bS18B from Mycolicibacterium paratuberculosis (strain ATCC BAA-968 / K-10) (Mycobacterium paratuberculosis).